Here is a 220-residue protein sequence, read N- to C-terminus: Large ribosomal subunit protein uL3 (220 aa).

The disordered stretch occupies residues 113 to 143; sequence GTTKGHGYQGNIHKDGQRRGPMAHGSRYHRR.

Belongs to the universal ribosomal protein uL3 family. As to quaternary structure, part of the 50S ribosomal subunit. Forms a cluster with proteins L14 and L19.

One of the primary rRNA binding proteins, it binds directly near the 3'-end of the 23S rRNA, where it nucleates assembly of the 50S subunit. The sequence is that of Large ribosomal subunit protein uL3 from Limosilactobacillus fermentum (strain NBRC 3956 / LMG 18251) (Lactobacillus fermentum).